Reading from the N-terminus, the 199-residue chain is Holliday junction branch migration complex subunit RuvA (199 aa).

Residues 1–65 (MIASLRGKLL…DRGQRLFGFG (65 aa)) form a domain I region. The tract at residues 66–144 (SKKDRESFEL…KFEMFLNEGT (79 aa)) is domain II. The tract at residues 145-155 (TESSFVDRETD) is flexible linker. The segment at 155–199 (DLATLALIQLGFDEKSATKQVADAKKLNPGLSASDIVKQVITGTR) is domain III.

This sequence belongs to the RuvA family. As to quaternary structure, homotetramer. Forms an RuvA(8)-RuvB(12)-Holliday junction (HJ) complex. HJ DNA is sandwiched between 2 RuvA tetramers; dsDNA enters through RuvA and exits via RuvB. An RuvB hexamer assembles on each DNA strand where it exits the tetramer. Each RuvB hexamer is contacted by two RuvA subunits (via domain III) on 2 adjacent RuvB subunits; this complex drives branch migration. In the full resolvosome a probable DNA-RuvA(4)-RuvB(12)-RuvC(2) complex forms which resolves the HJ.

It localises to the cytoplasm. Functionally, the RuvA-RuvB-RuvC complex processes Holliday junction (HJ) DNA during genetic recombination and DNA repair, while the RuvA-RuvB complex plays an important role in the rescue of blocked DNA replication forks via replication fork reversal (RFR). RuvA specifically binds to HJ cruciform DNA, conferring on it an open structure. The RuvB hexamer acts as an ATP-dependent pump, pulling dsDNA into and through the RuvAB complex. HJ branch migration allows RuvC to scan DNA until it finds its consensus sequence, where it cleaves and resolves the cruciform DNA. This Leptospira biflexa serovar Patoc (strain Patoc 1 / Ames) protein is Holliday junction branch migration complex subunit RuvA.